The following is a 118-amino-acid chain: Large ribosomal subunit protein uL18 (118 aa).

Belongs to the universal ribosomal protein uL18 family. As to quaternary structure, part of the 50S ribosomal subunit; part of the 5S rRNA/L5/L18/L25 subcomplex. Contacts the 5S and 23S rRNAs.

In terms of biological role, this is one of the proteins that bind and probably mediate the attachment of the 5S RNA into the large ribosomal subunit, where it forms part of the central protuberance. The protein is Large ribosomal subunit protein uL18 of Parvibaculum lavamentivorans (strain DS-1 / DSM 13023 / NCIMB 13966).